The following is an 860-amino-acid chain: Transcription factor E2F8 (860 aa).

Residues 1–114 form a disordered region; the sequence is MENQKENLFS…NEKSQPSRKE (114 aa). Position 71 is a phosphoserine (Ser-71). Composition is skewed to basic and acidic residues over residues 74 to 84 and 92 to 114; these read IRSRDQKRGLS and EARDCLHEPQAKTNEKSQPSRKE. 2 DNA-binding regions span residues 112–181 and 261–347; these read RKEK…TWHG and RKDK…KWTG. 2 disordered regions span residues 407 to 433 and 533 to 616; these read RRKISSAPSSPVKSSKAESSQNSPPVP and TPPH…PKED. A compositionally biased stretch (low complexity) spans 411–426; it reads SSAPSSPVKSSKAESS. Residues Ser-412 and Ser-416 each carry the phosphoserine modification. The span at 542-554 shows a compositional bias: polar residues; it reads VCPTQSSNATGSK. 2 stretches are compositionally biased toward basic and acidic residues: residues 555–565 and 586–596; these read DPTDAPTEKTA and RSKETTGDRGT.

It belongs to the E2F/DP family. Homodimer and heterodimer: mainly forms homodimers and, to a lesser extent, heterodimers with E2F8. Dimerization is important for DNA-binding. Interacts with HIF1A.

Its subcellular location is the nucleus. In terms of biological role, atypical E2F transcription factor that participates in various processes such as angiogenesis and polyploidization of specialized cells. Mainly acts as a transcription repressor that binds DNA independently of DP proteins and specifically recognizes the E2 recognition site 5'-TTTC[CG]CGC-3'. Directly represses transcription of classical E2F transcription factors such as E2F1: component of a feedback loop in S phase by repressing the expression of E2F1, thereby preventing p53/TP53-dependent apoptosis. Plays a key role in polyploidization of cells in placenta and liver by regulating the endocycle, probably by repressing genes promoting cytokinesis and antagonizing action of classical E2F proteins (E2F1, E2F2 and/or E2F3). Required for placental development by promoting polyploidization of trophoblast giant cells. Acts as a promoter of sprouting angiogenesis, possibly by acting as a transcription activator: associates with HIF1A, recognizes and binds the VEGFA promoter, which is different from canonical E2 recognition site, and activates expression of the VEGFA gene. The protein is Transcription factor E2F8 (E2f8) of Rattus norvegicus (Rat).